A 173-amino-acid polypeptide reads, in one-letter code: Translation initiation factor IF-3 (173 aa).

The protein belongs to the IF-3 family. In terms of assembly, monomer.

The protein resides in the cytoplasm. Functionally, IF-3 binds to the 30S ribosomal subunit and shifts the equilibrium between 70S ribosomes and their 50S and 30S subunits in favor of the free subunits, thus enhancing the availability of 30S subunits on which protein synthesis initiation begins. The chain is Translation initiation factor IF-3 from Methylobacterium sp. (strain 4-46).